The primary structure comprises 151 residues: Protein archease-like (151 aa).

The Ca(2+) site is built by Asp-20, Asp-150, and Ile-151.

It belongs to the archease family.

Component of the tRNA-splicing ligase complex required to facilitate the enzymatic turnover of catalytic subunit RtcB. The polypeptide is Protein archease-like (Dictyostelium discoideum (Social amoeba)).